The sequence spans 439 residues: Xylose isomerase (439 aa).

Catalysis depends on residues histidine 101 and aspartate 104. Residues glutamate 232, glutamate 268, histidine 271, aspartate 296, aspartate 307, aspartate 309, and aspartate 339 each contribute to the Mg(2+) site.

This sequence belongs to the xylose isomerase family. As to quaternary structure, homotetramer. Requires Mg(2+) as cofactor.

The protein localises to the cytoplasm. It catalyses the reaction alpha-D-xylose = alpha-D-xylulofuranose. The protein is Xylose isomerase of Marinomonas sp. (strain MWYL1).